Consider the following 119-residue polypeptide: Dihydroneopterin aldolase (119 aa).

Substrate contacts are provided by residues Glu-21, Tyr-53, and 72 to 73 (IE). Catalysis depends on Lys-99, which acts as the Proton donor/acceptor.

It belongs to the DHNA family.

It carries out the reaction 7,8-dihydroneopterin = 6-hydroxymethyl-7,8-dihydropterin + glycolaldehyde. Its pathway is cofactor biosynthesis; tetrahydrofolate biosynthesis; 2-amino-4-hydroxy-6-hydroxymethyl-7,8-dihydropteridine diphosphate from 7,8-dihydroneopterin triphosphate: step 3/4. In terms of biological role, catalyzes the conversion of 7,8-dihydroneopterin to 6-hydroxymethyl-7,8-dihydropterin. This Streptococcus pyogenes serotype M1 protein is Dihydroneopterin aldolase (folB).